The primary structure comprises 65 residues: Large ribosomal subunit protein bL31 (65 aa).

The Zn(2+) site is built by C16, C18, C36, and C39.

Belongs to the bacterial ribosomal protein bL31 family. Type A subfamily. In terms of assembly, part of the 50S ribosomal subunit. Zn(2+) serves as cofactor.

Its function is as follows. Binds the 23S rRNA. This is Large ribosomal subunit protein bL31 from Geobacter sulfurreducens (strain ATCC 51573 / DSM 12127 / PCA).